Here is a 504-residue protein sequence, read N- to C-terminus: ATP synthase subunit alpha (504 aa).

169-176 contributes to the ATP binding site; the sequence is GDRKTGKT.

The protein belongs to the ATPase alpha/beta chains family. In terms of assembly, F-type ATPases have 2 components, CF(1) - the catalytic core - and CF(0) - the membrane proton channel. CF(1) has five subunits: alpha(3), beta(3), gamma(1), delta(1), epsilon(1). CF(0) has three main subunits: a(1), b(2) and c(9-12). The alpha and beta chains form an alternating ring which encloses part of the gamma chain. CF(1) is attached to CF(0) by a central stalk formed by the gamma and epsilon chains, while a peripheral stalk is formed by the delta and b chains.

The protein localises to the cell membrane. The enzyme catalyses ATP + H2O + 4 H(+)(in) = ADP + phosphate + 5 H(+)(out). In terms of biological role, produces ATP from ADP in the presence of a proton gradient across the membrane. The alpha chain is a regulatory subunit. This chain is ATP synthase subunit alpha, found in Leuconostoc citreum (strain KM20).